The primary structure comprises 221 residues: Probable glutathione S-transferase parC (221 aa).

The GST N-terminal domain maps to 4-83; the sequence is EEVILLDFWP…YIEEVWKDKA (80 aa). Residues Ser-14, Lys-41, Ile-55, and 67-68 contribute to the glutathione site; that span reads ES. In terms of domain architecture, GST C-terminal spans 90–214; sequence DPYDRAQARF…PKVLEFVKVL (125 aa).

Belongs to the GST superfamily. Phi family. Abundant in seedlings and roots. It is also found in the shoot tips, flowers and leaves.

The catalysed reaction is RX + glutathione = an S-substituted glutathione + a halide anion + H(+). In terms of biological role, conjugation of reduced glutathione to a wide number of exogenous and endogenous hydrophobic electrophiles. This is Probable glutathione S-transferase parC (PARC) from Nicotiana tabacum (Common tobacco).